Reading from the N-terminus, the 515-residue chain is MSGYTAFFNNFLGKSPNWYKLSIIVFLILNPILYFLISPFIAGWCLVIEFIFTLAMALKCYPLQPGGLLAFEAIAIGMTSPAHVKAEIMASFEVILLLMFMVAGIYFMKQLLLFAFTRLLITVRSKIVLSLSFCLSAAFLSAFLDALTVVAVIISVVMGFYGVYHKVASGNNFDDSTDITNDEKIKKDQQVLEQFRSFLRSLMMHAGVGTALGGVMTLVGEPQNLIIAEQASWGFGEFFIRMAPVTVPVLICGLITCVMIEKMNIFGYGDKLPRKVWGILAKFNRAQQQKMNRQERQKLIIQGIIGIWLVCGLAFHLAAVGLIGLSVIVLTTAFCGITSESTIGKSFQESLPFCALLVVFFSVVAVIIDQHLFGPIINYVLSASESTQLLLFYGFNGLLSAISDNVFVATVYINEAKNALHAGIISLEQFELLAVAINTGTNLPSVATPNGQAAFLFLLTSSLAPLIRLSYGKMVYMALPYTIVLTVVGLLAVEYILPGATKYFSSLGWITALPV.

The next 13 membrane-spanning stretches (helical) occupy residues 23-43, 44-64, 88-108, 119-139, 143-163, 202-222, 238-258, 303-323, 324-344, 357-377, 389-409, 447-467, and 477-497; these read IIVFLILNPILYFLISPFIAG, WCLVIEFIFTLAMALKCYPLQ, IMASFEVILLLMFMVAGIYFM, LLITVRSKIVLSLSFCLSAAF, FLDALTVVAVIISVVMGFYGV, LMMHAGVGTALGGVMTLVGEP, FFIRMAPVTVPVLICGLITCV, GIIGIWLVCGLAFHLAAVGLI, GLSVIVLTTAFCGITSESTIG, LVVFFSVVAVIIDQHLFGPII, LLLFYGFNGLLSAISDNVFVA, ATPNGQAAFLFLLTSSLAPLI, and MALPYTIVLTVVGLLAVEYIL.

The protein belongs to the NhaB Na(+)/H(+) (TC 2.A.34) antiporter family.

It localises to the cell inner membrane. It carries out the reaction 2 Na(+)(in) + 3 H(+)(out) = 2 Na(+)(out) + 3 H(+)(in). Functionally, na(+)/H(+) antiporter that extrudes sodium in exchange for external protons. The chain is Na(+)/H(+) antiporter NhaB from Mannheimia succiniciproducens (strain KCTC 0769BP / MBEL55E).